The chain runs to 1199 residues: MVDVNRFEYMKIGLASPEKIRSWSFGEVKKPETINYRTLKPEKDGLFCERIFGPTKDWECYCGKYKRIRYKGIICDRCGVEVTKSKVRRERMGHIELAAPVSHIWYFKGIPSRMGLVLDMSPRALEEIIYFASYVVTDPGESTLEKKQLLSEKEYRAYREKFGSSFTAEMGAEAVRKLLRDVELEKEVAGLREDLRMIQGQRRTRAIKRLEVLDAFRNSGNNPEWMVLEVLPVIPPELRPMVQLDGGRFATSDLNDLYRRVINRNNRLKRLLDLGAPNIIVQNEKRMLQEAVDALIDNGRRGRPVTGPGNRPLKSLSHMLKGKQGRFRQNLLGKRVDYSGRSVIVVGPNLKMYQCGLPKEMALELFKPFVMKELVSRGIAPNIKSAKRKIERVQPEIWDVLEEVIREHPVLLNRAPTLHRLGIQAFEPTLVEGRAIRLHPLVCTAYNADFDGDQMAVHVPLSAEAQAEARLLMLAAQNILNPKDGKPVVTPSQDMVLGNYYLTLERENAIGEGKIFSTVNEALIAYQNGYVHFHTRVAIPAGVLKNPTFTEAQNEKLLVTTVGKLIFNEILPTTFPYLNEPSMNNLQEATPDQYFLEKGTDIAAEIKSRPIIEPFKKGFLGNVIAEVFKRFETTETSRMLDRMKNLGFKHSTRAGITVGIADIIVLPDKQEILVEAQDNVDRVMKSYRRGLITEEERYERVVKSWNDAKDEIQSRLMKSLNRLNPIFMMSDSGARGNASNFTQLAGMRGLMAAPSGRIIELPIKSSFREGLTVQEYFISTHGARKGLADTALKTADSGYLTRRLVDVAQDVIIREDDCGTDRGIRVTALREGTEEIENLYDRLVGRTAFEKVVHPETGAVLVSTNELIDEDIARAITDAGIDNVEIRTAFTCNTSHGVCKKCYGRNLATGNDVEVGEAVGIIAAQSIGEPGTQLTMRTFHTGGVAGDDITQGLPRIQELFEARNPKGQAVISEIDGQVIDFTESRDKRELTIQGLSETRTYTIPFGSRLRVQLGEEVKAGQVFTEGSIDPKELLNVKGVSGVQNYLLQEVQKVYRMQGVEIGDKHVEVMVRQMIRRVRVIESGETSLLPGSLVDISTFKEACKEALRAGKALASAKPVLLGITKASLETDSFLSAASFQETTRVLTDAAIKGKSDYLRGLKENVIIGKLVPAGTGMTRYRQIGLEIAGEAPVEADSPVE.

Cys-60, Cys-62, Cys-75, and Cys-78 together coordinate Zn(2+). Mg(2+) contacts are provided by Asp-449, Asp-451, and Asp-453. Positions 818, 892, 899, and 902 each coordinate Zn(2+).

It belongs to the RNA polymerase beta' chain family. In terms of assembly, the RNAP catalytic core consists of 2 alpha, 1 beta, 1 beta' and 1 omega subunit. When a sigma factor is associated with the core the holoenzyme is formed, which can initiate transcription. It depends on Mg(2+) as a cofactor. Requires Zn(2+) as cofactor.

It catalyses the reaction RNA(n) + a ribonucleoside 5'-triphosphate = RNA(n+1) + diphosphate. Functionally, DNA-dependent RNA polymerase catalyzes the transcription of DNA into RNA using the four ribonucleoside triphosphates as substrates. This Exiguobacterium sibiricum (strain DSM 17290 / CCUG 55495 / CIP 109462 / JCM 13490 / 255-15) protein is DNA-directed RNA polymerase subunit beta'.